Consider the following 359-residue polypeptide: Diacyltrehalose acyltransferase Chp2 (359 aa).

Residues 4-24 traverse the membrane as a helical segment; that stretch reads VIAGAFAVWLVGWAGGFGTAI. The region spanning 79–316 is the PE-PPE domain; that stretch reads PNAKHDLIDY…VLQPQIDAAY (238 aa).

Belongs to the mycobacterial PPE family.

The protein resides in the cell inner membrane. Its activity is regulated as follows. Activity is probably potentiated by the DAT/PAT transporter MmpL10. Inhibited by the lipase inhibitor tetrahydrolipstatin (THL). In terms of biological role, involved in the final steps of polyacyltrehalose (PAT) biosynthesis. Catalyzes the transfer of three mycolipenoyl groups onto diacyltrehalose (DAT) to form PAT. This chain is Diacyltrehalose acyltransferase Chp2, found in Mycobacterium tuberculosis (strain ATCC 25618 / H37Rv).